A 460-amino-acid polypeptide reads, in one-letter code: MTTKEQFFFKGATSKNKIHFISLGCSRNLVDSEVMLGILLKAGYEATELLREADYLILNTCGFLKAARDESTDYLQRIINEKKETAKIILTGCMVSKHKEELKPWLPYVHYVLGSGDVEHILSAIESKESGEKLSSKSYLEMGEVPRKLSTPKHYAYLKIAEGCRKRCAFCIIPTIKGGLRSKPLEQVMKEFRLLLKMGVKEIILIAQDLGDYGKDLSKDRKSCLYSVLREMLKEPGNYWIRMLYLYPDEVDDTLIDLMEKDQRLLPYVDIPLQHINNRVLKKMLRTTSREQILDLLTKLRTRIPHIYIRSSLIVGFPGETEEEFQELVNFVGEGWIDNLGIFSYSQEKGSLAAEMPDQIPQSVKSKRLKILSQTQKKNVEKHNKQFVGKIVEAVIDGYHPDSEFLLTARFYGQAPEVDPCIIVNEARLVSGFGERYLIEITGYVGYDLVGRVVNKVPGE.

Residues 16-130 form the MTTase N-terminal domain; the sequence is NKIHFISLGC…ILSAIESKES (115 aa). The [4Fe-4S] cluster site is built by C25, C61, C93, C164, C168, and C171. The 233-residue stretch at 150–382 folds into the Radical SAM core domain; sequence STPKHYAYLK…SQTQKKNVEK (233 aa). Residues 385–455 form the TRAM domain; sequence KQFVGKIVEA…GYDLVGRVVN (71 aa).

This sequence belongs to the methylthiotransferase family. RimO subfamily. Requires [4Fe-4S] cluster as cofactor.

The protein resides in the cytoplasm. It carries out the reaction L-aspartate(89)-[ribosomal protein uS12]-hydrogen + (sulfur carrier)-SH + AH2 + 2 S-adenosyl-L-methionine = 3-methylsulfanyl-L-aspartate(89)-[ribosomal protein uS12]-hydrogen + (sulfur carrier)-H + 5'-deoxyadenosine + L-methionine + A + S-adenosyl-L-homocysteine + 2 H(+). Catalyzes the methylthiolation of an aspartic acid residue of ribosomal protein uS12. This Chlamydia abortus (strain DSM 27085 / S26/3) (Chlamydophila abortus) protein is Ribosomal protein uS12 methylthiotransferase RimO.